A 281-amino-acid polypeptide reads, in one-letter code: NADPH-dependent 7-cyano-7-deazaguanine reductase (281 aa).

88-90 (IES) serves as a coordination point for substrate. NADPH is bound at residue 90–91 (SK). Catalysis depends on Cys-189, which acts as the Thioimide intermediate. Asp-196 acts as the Proton donor in catalysis. 228–229 (HE) contributes to the substrate binding site. 257-258 (RG) is an NADPH binding site.

It belongs to the GTP cyclohydrolase I family. QueF type 2 subfamily. In terms of assembly, homodimer.

The protein resides in the cytoplasm. The catalysed reaction is 7-aminomethyl-7-carbaguanine + 2 NADP(+) = 7-cyano-7-deazaguanine + 2 NADPH + 3 H(+). The protein operates within tRNA modification; tRNA-queuosine biosynthesis. In terms of biological role, catalyzes the NADPH-dependent reduction of 7-cyano-7-deazaguanine (preQ0) to 7-aminomethyl-7-deazaguanine (preQ1). In Erwinia tasmaniensis (strain DSM 17950 / CFBP 7177 / CIP 109463 / NCPPB 4357 / Et1/99), this protein is NADPH-dependent 7-cyano-7-deazaguanine reductase.